Reading from the N-terminus, the 420-residue chain is 3-phosphoshikimate 1-carboxyvinyltransferase (420 aa).

Residues 1 to 24 (MTRTAKLTIIPPGRPLSGRAMPPG) are disordered. Residues Lys26, Ser27, and Arg31 each contribute to the 3-phosphoshikimate site. Lys26 contributes to the phosphoenolpyruvate binding site. 2 residues coordinate phosphoenolpyruvate: Gly97 and Arg125. The 3-phosphoshikimate site is built by Ser170, Ser171, Gln172, Asp297, Asn320, and Lys324. Gln172 contributes to the phosphoenolpyruvate binding site. Residue Asp297 is the Proton acceptor of the active site. Positions 328, 375, and 400 each coordinate phosphoenolpyruvate.

Belongs to the EPSP synthase family. Monomer.

It is found in the cytoplasm. The catalysed reaction is 3-phosphoshikimate + phosphoenolpyruvate = 5-O-(1-carboxyvinyl)-3-phosphoshikimate + phosphate. Its pathway is metabolic intermediate biosynthesis; chorismate biosynthesis; chorismate from D-erythrose 4-phosphate and phosphoenolpyruvate: step 6/7. In terms of biological role, catalyzes the transfer of the enolpyruvyl moiety of phosphoenolpyruvate (PEP) to the 5-hydroxyl of shikimate-3-phosphate (S3P) to produce enolpyruvyl shikimate-3-phosphate and inorganic phosphate. This chain is 3-phosphoshikimate 1-carboxyvinyltransferase, found in Rhizobium etli (strain CIAT 652).